The following is a 151-amino-acid chain: Putative pre-16S rRNA nuclease (151 aa).

It belongs to the YqgF nuclease family.

It localises to the cytoplasm. Could be a nuclease involved in processing of the 5'-end of pre-16S rRNA. This is Putative pre-16S rRNA nuclease from Neisseria meningitidis serogroup B (strain ATCC BAA-335 / MC58).